The primary structure comprises 320 residues: Beta-ketoacyl-[acyl-carrier-protein] synthase III (320 aa).

Active-site residues include cysteine 114 and histidine 247. Residues 248-252 (QANRR) form an ACP-binding region. The active site involves asparagine 277.

This sequence belongs to the thiolase-like superfamily. FabH family. In terms of assembly, homodimer.

The protein resides in the cytoplasm. The catalysed reaction is malonyl-[ACP] + acetyl-CoA + H(+) = 3-oxobutanoyl-[ACP] + CO2 + CoA. It functions in the pathway lipid metabolism; fatty acid biosynthesis. Functionally, catalyzes the condensation reaction of fatty acid synthesis by the addition to an acyl acceptor of two carbons from malonyl-ACP. Catalyzes the first condensation reaction which initiates fatty acid synthesis and may therefore play a role in governing the total rate of fatty acid production. Possesses both acetoacetyl-ACP synthase and acetyl transacylase activities. Its substrate specificity determines the biosynthesis of branched-chain and/or straight-chain of fatty acids. The protein is Beta-ketoacyl-[acyl-carrier-protein] synthase III of Neisseria gonorrhoeae (strain ATCC 700825 / FA 1090).